We begin with the raw amino-acid sequence, 190 residues long: Superoxide dismutase [Cu-Zn] (190 aa).

Positions methionine 1–alanine 23 are cleaved as a signal peptide. Positions 83, 85, and 108 each coordinate Cu cation. A disulfide bridge connects residues cysteine 90 and cysteine 186. The Zn(2+) site is built by histidine 108, histidine 117, histidine 126, and aspartate 129. The interval methionine 162–glycine 181 is disordered. Residue histidine 164 coordinates Cu cation.

It belongs to the Cu-Zn superoxide dismutase family. Homodimer. It depends on Cu cation as a cofactor. Zn(2+) serves as cofactor.

It is found in the periplasm. The enzyme catalyses 2 superoxide + 2 H(+) = H2O2 + O2. Its function is as follows. Destroys radicals which are normally produced within the cells and which are toxic to biological systems. The polypeptide is Superoxide dismutase [Cu-Zn] (sodC) (Actinobacillus pleuropneumoniae (Haemophilus pleuropneumoniae)).